A 195-amino-acid chain; its full sequence is Nucleoside triphosphate pyrophosphatase (195 aa).

Catalysis depends on D70, which acts as the Proton acceptor.

This sequence belongs to the Maf family. Requires a divalent metal cation as cofactor.

Its subcellular location is the cytoplasm. The catalysed reaction is a ribonucleoside 5'-triphosphate + H2O = a ribonucleoside 5'-phosphate + diphosphate + H(+). It catalyses the reaction a 2'-deoxyribonucleoside 5'-triphosphate + H2O = a 2'-deoxyribonucleoside 5'-phosphate + diphosphate + H(+). In terms of biological role, nucleoside triphosphate pyrophosphatase. May have a dual role in cell division arrest and in preventing the incorporation of modified nucleotides into cellular nucleic acids. This Synechocystis sp. (strain ATCC 27184 / PCC 6803 / Kazusa) protein is Nucleoside triphosphate pyrophosphatase.